Here is a 291-residue protein sequence, read N- to C-terminus: Lysosomal amino acid transporter 1 homolog (291 aa).

Over methionine 1 to alanine 37 the chain is Lumenal. N-linked (GlcNAc...) asparagine glycosylation occurs at asparagine 10. The 67-residue stretch at tryptophan 34–tyrosine 100 folds into the PQ-loop 1 domain. Residues serine 38–isoleucine 58 form a helical membrane-spanning segment. The Cytoplasmic segment spans residues lysine 59–serine 71. The chain crosses the membrane as a helical span at residues leucine 72–alanine 92. Residues aspartate 93–glutamine 98 lie on the Lumenal side of the membrane. Residues threonine 99–tyrosine 119 form a helical membrane-spanning segment. The Cytoplasmic portion of the chain corresponds to lysine 120–serine 134. Residues valine 135–valine 155 traverse the membrane as a helical segment. At alanine 156–valine 182 the chain is on the lumenal side. The helical transmembrane segment at isoleucine 183 to isoleucine 203 threads the bilayer. Residues glycine 184–glutamine 243 enclose the PQ-loop 2 domain. The Cytoplasmic portion of the chain corresponds to arginine 204–glycine 214. Residues isoleucine 215 to leucine 235 traverse the membrane as a helical segment. Topologically, residues leucine 236–proline 254 are lumenal. A helical membrane pass occupies residues tryptophan 255–valine 275. Residues tyrosine 276 to serine 291 lie on the Cytoplasmic side of the membrane. A Di-leucine motif motif is present at residues leucine 288–leucine 289.

This sequence belongs to the laat-1 family.

It is found in the lysosome membrane. Amino acid transporter that specifically mediates the pH-dependent export of the cationic amino acids arginine, histidine and lysine from lysosomes. The protein is Lysosomal amino acid transporter 1 homolog of Homo sapiens (Human).